Here is an 87-residue protein sequence, read N- to C-terminus: Large ribosomal subunit protein bL27 (87 aa).

The interval 1-20 (MARKRGGSGSKNGRDSNPKY) is disordered.

This sequence belongs to the bacterial ribosomal protein bL27 family.

The sequence is that of Large ribosomal subunit protein bL27 (rpmA) from Treponema pallidum (strain Nichols).